A 376-amino-acid polypeptide reads, in one-letter code: Thymidine kinase (376 aa).

A disordered region spans residues Met1–Thr38. Over residues Ser19–Gln35 the composition is skewed to basic residues. Gly56 to Thr63 lines the ATP pocket. The Proton acceptor role is filled by Glu83. Residues Tyr101 and Gln125 each coordinate substrate. Position 216 (Arg216) interacts with ATP. Arg222 is a binding site for substrate.

This sequence belongs to the herpesviridae thymidine kinase family. Homodimer.

The catalysed reaction is thymidine + ATP = dTMP + ADP + H(+). Functionally, catalyzes the transfer of the gamma-phospho group of ATP to thymidine to generate dTMP in the salvage pathway of pyrimidine synthesis. The dTMP serves as a substrate for DNA polymerase during viral DNA replication. Allows the virus to be reactivated and to grow in non-proliferative cells lacking a high concentration of phosphorylated nucleic acid precursors. The chain is Thymidine kinase from Homo sapiens (Human).